The sequence spans 84 residues: RQC P-site tRNA stabilizing factor (84 aa).

In terms of domain architecture, S4 RNA-binding spans 1-64 (MRIDKFLQSV…IEEYTILQIP (64 aa)).

This sequence belongs to the RqcP family. In terms of assembly, associates with stalled 50S ribosomal subunits. Binds to RqcH, 23S rRNA and the P-site tRNA. Does not require RqcH for association with 50S subunits.

Functionally, key component of the ribosome quality control system (RQC), a ribosome-associated complex that mediates the extraction of incompletely synthesized nascent chains from stalled ribosomes and their subsequent degradation. RqcH recruits Ala-charged tRNA, and with RqcP directs the elongation of stalled nascent chains on 50S ribosomal subunits, leading to non-templated C-terminal alanine extensions (Ala tail). The Ala tail promotes nascent chain degradation. RqcP is associated with the translocation-like movement of the peptidyl-tRNA from the A-site into the P-site. This Helicobacter pylori (strain J99 / ATCC 700824) (Campylobacter pylori J99) protein is RQC P-site tRNA stabilizing factor.